We begin with the raw amino-acid sequence, 101 residues long: MAKISSVERNKKRERMAAQFAARRAKLKAIANNREASPEERFEASLKLAELPRNSAKIRVRLRCEVTGRSRGNYRKFKLCRNKLRELASQGQIPGMVKSSW.

The protein belongs to the universal ribosomal protein uS14 family. In terms of assembly, part of the 30S ribosomal subunit. Contacts proteins S3 and S10.

Functionally, binds 16S rRNA, required for the assembly of 30S particles and may also be responsible for determining the conformation of the 16S rRNA at the A site. This chain is Small ribosomal subunit protein uS14, found in Paramagnetospirillum magneticum (strain ATCC 700264 / AMB-1) (Magnetospirillum magneticum).